A 559-amino-acid polypeptide reads, in one-letter code: MTQVSHIGSSHFNINSSIKTALPLINSQYNSLVNESTISSNINLPFRLDAPSLFNGLPEEWGPTDAELSTHSNVNYPGLTEATIDYKFCSTLNSYFDTNQRFGNVPNDTYLMANSMAANIENNSWHNSRYYFDGNHPLSQWLPVPVNCWSNNNYIRDDFYDKSIQEEEFKSRSVLQTNEKNSTNVSSDINHYKPLITDENENLKMTKPTHNLLNNDSINLCRFPQNEIIMPDLINAPSPTLTNNNLFYSCGDHRSGKTEDLPSSDDLEQFAKMFKQRRIKLGYTQADVGLALGTLYGNVFSQTTICRFEALQLSFKNMCKLRPLLQKWLHEADSSSESPTNFDKISAQSRKRKKRTSIEANVKSILESSFMKLSKPSAQDISSLAEKLSLEKEVVRVWFCNRRQKEKRITPSFDVNEQFDNEVSSTMPYSTLNDDRNEKTIKNSFENHEKLIKQTGETNHEQNNNSSVKRLKIRKEPDQISINDENTSCRAESSGIVPDTHYRQECDNHSICGYNIHDIHESSVLMSDPVSFYPRSFFMKNNIYSNGTTPTLFDHSQMI.

Residues 259–333 (EDLPSSDDLE…LLQKWLHEAD (75 aa)) enclose the POU-specific domain. Positions 351–410 (KRKKRTSIEANVKSILESSFMKLSKPSAQDISSLAEKLSLEKEVVRVWFCNRRQKEKRIT) form a DNA-binding region, homeobox.

Belongs to the POU transcription factor family.

Its subcellular location is the nucleus. In Dugesia japonica (Planarian), this protein is POU domain protein 1 (POU1).